Consider the following 339-residue polypeptide: Serine racemase (339 aa).

Glutamate 13 serves as a coordination point for Mg(2+). Serine 31, serine 32, isoleucine 33, lysine 51, and threonine 52 together coordinate ATP. Catalysis depends on lysine 56, which acts as the Proton acceptor. N6-(pyridoxal phosphate)lysine is present on lysine 56. Ca(2+) is bound at residue proline 69. Residue threonine 71 is modified to Phosphothreonine. Ca(2+) is bound at residue threonine 81. Serine 84 serves as the catalytic Proton acceptor. Pyridoxal 5'-phosphate is bound at residue asparagine 86. Residue glutamine 89 participates in ATP binding. S-nitrosocysteine is present on cysteine 113. Tyrosine 121 is a binding site for ATP. Asparagine 154 provides a ligand contact to pyridoxal 5'-phosphate. Aspartate 178 is a Mg(2+) binding site. Residues glycine 185, glycine 186, glycine 187, glycine 188, and methionine 189 each coordinate pyridoxal 5'-phosphate. Positions 210, 214, 216, and 247 each coordinate Mg(2+). 4 residues coordinate Ca(2+): glutamate 210, alanine 214, aspartate 216, and asparagine 247. Mn(2+) is bound by residues glutamate 210, alanine 214, and aspartate 216. ATP is bound at residue lysine 279. Serine 313 lines the pyridoxal 5'-phosphate pocket. ATP is bound at residue asparagine 316.

Belongs to the serine/threonine dehydratase family. As to quaternary structure, homodimer. Mg(2+) is required as a cofactor. Requires Mn(2+) as cofactor. It depends on Ca(2+) as a cofactor. The cofactor is pyridoxal 5'-phosphate. S-nitrosylated, leading to decrease the enzyme activity. As to expression, expressed in the hippocampus (at protein level). Expressed in the small intestine.

It catalyses the reaction L-serine = D-serine. It carries out the reaction D-serine = pyruvate + NH4(+). The enzyme catalyses L-serine = pyruvate + NH4(+). Its activity is regulated as follows. Allosterically activated by magnesium, and possibly also other divalent metal cations. Allosterically activated by ATP, ADP or GTP. Its function is as follows. Catalyzes the synthesis of D-serine from L-serine. D-serine is a key coagonist with glutamate at NMDA receptors. Has dehydratase activity towards both L-serine and D-serine. This Mus musculus (Mouse) protein is Serine racemase (Srr).